A 175-amino-acid polypeptide reads, in one-letter code: Catabolic 3-dehydroquinase (175 aa).

Tyrosine 23 serves as the catalytic Proton acceptor. 3 residues coordinate substrate: asparagine 74, histidine 80, and aspartate 87. The active-site Proton donor is the histidine 100. Substrate contacts are provided by residues 101–102 (IS) and arginine 111.

The protein belongs to the type-II 3-dehydroquinase family. Homododecamer. Adopts a ring-like structure, composed of an arrangement of two hexameric rings stacked on top of one another.

The catalysed reaction is 3-dehydroquinate = 3-dehydroshikimate + H2O. It participates in aromatic compound metabolism; 3,4-dihydroxybenzoate biosynthesis; 3,4-dihydroxybenzoate from 3-dehydroquinate: step 1/2. Is involved in the catabolism of quinate. Allows the utilization of quinate as carbon source via the beta-ketoadipate pathway. In Talaromyces marneffei (strain ATCC 18224 / CBS 334.59 / QM 7333) (Penicillium marneffei), this protein is Catabolic 3-dehydroquinase.